Reading from the N-terminus, the 689-residue chain is DNA ligase (689 aa).

NAD(+) contacts are provided by residues D40–D44, S89–L90, and E121. The active-site N6-AMP-lysine intermediate is K123. NAD(+)-binding residues include R144, E179, K295, and K319. Zn(2+) contacts are provided by C413, C416, C431, and C437. The BRCT domain occupies K610–V689.

Belongs to the NAD-dependent DNA ligase family. LigA subfamily. Mg(2+) is required as a cofactor. It depends on Mn(2+) as a cofactor.

The enzyme catalyses NAD(+) + (deoxyribonucleotide)n-3'-hydroxyl + 5'-phospho-(deoxyribonucleotide)m = (deoxyribonucleotide)n+m + AMP + beta-nicotinamide D-nucleotide.. Its function is as follows. DNA ligase that catalyzes the formation of phosphodiester linkages between 5'-phosphoryl and 3'-hydroxyl groups in double-stranded DNA using NAD as a coenzyme and as the energy source for the reaction. It is essential for DNA replication and repair of damaged DNA. In Rickettsia canadensis (strain McKiel), this protein is DNA ligase.